The following is a 165-amino-acid chain: Nucleotide-binding protein CHY_1197 (165 aa).

Belongs to the YajQ family.

Its function is as follows. Nucleotide-binding protein. The sequence is that of Nucleotide-binding protein CHY_1197 from Carboxydothermus hydrogenoformans (strain ATCC BAA-161 / DSM 6008 / Z-2901).